Here is a 534-residue protein sequence, read N- to C-terminus: Glucans biosynthesis protein D (534 aa).

Residues 1-30 constitute a signal peptide (tat-type signal); that stretch reads MRMQRRHLLKNAAAALAALGLPALPQWALA.

It belongs to the OpgD/OpgG family. Predicted to be exported by the Tat system. The position of the signal peptide cleavage has not been experimentally proven.

The protein localises to the periplasm. The protein operates within glycan metabolism; osmoregulated periplasmic glucan (OPG) biosynthesis. Functionally, probably involved in the control of the structural glucose backbone of osmoregulated periplasmic glucans (OPGs). The protein is Glucans biosynthesis protein D of Xanthomonas oryzae pv. oryzae (strain KACC10331 / KXO85).